Consider the following 156-residue polypeptide: Small ribosomal subunit protein uS7 (156 aa).

Belongs to the universal ribosomal protein uS7 family. As to quaternary structure, part of the 30S ribosomal subunit. Contacts proteins S9 and S11.

In terms of biological role, one of the primary rRNA binding proteins, it binds directly to 16S rRNA where it nucleates assembly of the head domain of the 30S subunit. Is located at the subunit interface close to the decoding center, probably blocks exit of the E-site tRNA. The protein is Small ribosomal subunit protein uS7 of Parvibaculum lavamentivorans (strain DS-1 / DSM 13023 / NCIMB 13966).